A 94-amino-acid polypeptide reads, in one-letter code: FXYD domain-containing ion transport regulator 6 (94 aa).

The N-terminal stretch at M1 to A17 is a signal peptide. Residues S18–Q34 lie on the Extracellular side of the membrane. The chain crosses the membrane as a helical span at residues T35 to S57. The Cytoplasmic segment spans residues R58–N94.

It belongs to the FXYD family. Regulatory subunit of the sodium/potassium-transporting ATPase which is composed of a catalytic alpha subunit, a non-catalytic beta subunit and an additional regulatory subunit. The regulatory subunit, a member of the FXYD protein family, modulates the enzymatic activity in a tissue- and isoform-specific way by changing affinities of the Na+/K+-ATPase toward Na(+), K(+) or ATP. In terms of tissue distribution, expressed in the neuronal fibers of the medial part of lateral habenula nucleus, thalamus, hypothalamus, stria terminalis, zona incerta, amygdaloid body and cingulum, olfactory bulb, hippocampus, cerebral cortex and cerebellum. In the cerebellum there is a predominant expression pattern in the granule layer of lobules VI-IX of the posterior lobe. Detected in inner ear.

The protein resides in the cell membrane. Functionally, associates with and regulates the activity of the sodium/potassium-transporting ATPase (NKA) which catalyzes the hydrolysis of ATP coupled with the exchange of Na(+) and K(+) ions across the plasma membrane. Decreases the apparent affinity of the transporter for Na(+). In addition to modulating NKA kinetics, may also function as a regulator of NKA localization to the plasma membrane. This is FXYD domain-containing ion transport regulator 6 (Fxyd6) from Rattus norvegicus (Rat).